The following is a 162-amino-acid chain: MSGLTHFDAAGHAHMVDVGGKQETQRIAIARGTIRMLPATFALIRDGKAKKGDVLGVARIAAIQGAKRTADLIPLCHPLALTRVAVDFELDDALPGVHCVAQVETFGRTGVEMEALTAVQVGLLTVYDMCKAVDRGMVITEVSVREKRGGKSGDWKAEDTAG.

Substrate is bound by residues 75-77 (LCH) and 113-114 (ME). Residue D128 is part of the active site.

The protein belongs to the MoaC family. Homohexamer; trimer of dimers.

It carries out the reaction (8S)-3',8-cyclo-7,8-dihydroguanosine 5'-triphosphate = cyclic pyranopterin phosphate + diphosphate. It functions in the pathway cofactor biosynthesis; molybdopterin biosynthesis. Catalyzes the conversion of (8S)-3',8-cyclo-7,8-dihydroguanosine 5'-triphosphate to cyclic pyranopterin monophosphate (cPMP). In Burkholderia ambifaria (strain ATCC BAA-244 / DSM 16087 / CCUG 44356 / LMG 19182 / AMMD) (Burkholderia cepacia (strain AMMD)), this protein is Cyclic pyranopterin monophosphate synthase.